Consider the following 181-residue polypeptide: Alkyl hydroperoxide reductase AhpD (181 aa).

The active-site Proton donor is the C130. The cysteines at positions 130 and 133 are disulfide-linked. C133 (cysteine sulfenic acid (-SOH) intermediate) is an active-site residue.

Belongs to the AhpD family.

The catalysed reaction is N(6)-[(R)-dihydrolipoyl]-L-lysyl-[lipoyl-carrier protein] + a hydroperoxide = N(6)-[(R)-lipoyl]-L-lysyl-[lipoyl-carrier protein] + an alcohol + H2O. Its function is as follows. Antioxidant protein with alkyl hydroperoxidase activity. Required for the reduction of the AhpC active site cysteine residues and for the regeneration of the AhpC enzyme activity. The sequence is that of Alkyl hydroperoxide reductase AhpD from Gluconacetobacter diazotrophicus (strain ATCC 49037 / DSM 5601 / CCUG 37298 / CIP 103539 / LMG 7603 / PAl5).